Reading from the N-terminus, the 122-residue chain is Large ribosomal subunit protein uL14 (122 aa).

It belongs to the universal ribosomal protein uL14 family. As to quaternary structure, part of the 50S ribosomal subunit. Forms a cluster with proteins L3 and L19. In the 70S ribosome, L14 and L19 interact and together make contacts with the 16S rRNA in bridges B5 and B8.

Functionally, binds to 23S rRNA. Forms part of two intersubunit bridges in the 70S ribosome. The protein is Large ribosomal subunit protein uL14 of Mycolicibacterium vanbaalenii (strain DSM 7251 / JCM 13017 / BCRC 16820 / KCTC 9966 / NRRL B-24157 / PYR-1) (Mycobacterium vanbaalenii).